Reading from the N-terminus, the 160-residue chain is Triabin (160 aa).

Residues 1–18 (MKTIIAVTIFGILTCAYA) form the signal peptide. 3 disulfides stabilise this stretch: C24-C128, C57-C160, and C87-C102.

Belongs to the calycin superfamily. Triabin family. As to expression, expressed in salivary glands.

The protein resides in the secreted. In terms of biological role, thrombin inhibitor. Forms a non-covalent complex with thrombin at a molar ratio of 1:1. Inhibits thrombin-induced platelet aggregation. Prolongs thrombin clotting time and activated partial thromboplastin time. It only minimally suppresses the amidolytic activity of thrombin. Inhibits thrombin-mediated fibrin formation in the host. Inhibits thrombin-induced endothelium-dependent relaxant and contractile responses in host blood vessels. Inhibits thrombin-induced mitogenesis in host vascular smooth muscle cells. The polypeptide is Triabin (Meccus pallidipennis (Triatomine bug)).